A 337-amino-acid chain; its full sequence is Protein BIG GRAIN 1-like (337 aa).

3 disordered regions span residues 1–32 (MRDM…PSFS), 120–163 (SAAG…RPAS), and 179–235 (KRPS…PSRS). A compositionally biased stretch (basic and acidic residues) spans 137–146 (HEQPDVEKTA). 2 stretches are compositionally biased toward low complexity: residues 150–163 (PGSA…RPAS) and 195–209 (PACS…SSYA).

The protein belongs to the BIG GRAIN 1 (BG1) plant protein family.

It localises to the cell membrane. Its function is as follows. Involved in auxin transport. Regulator of the auxin signaling pathway. In Oryza sativa subsp. japonica (Rice), this protein is Protein BIG GRAIN 1-like.